Consider the following 72-residue polypeptide: Translation initiation factor IF-1 (72 aa).

The 72-residue stretch at 1–72 (MAKEDVIEMQ…SKGRIVFRAR (72 aa)) folds into the S1-like domain.

This sequence belongs to the IF-1 family. In terms of assembly, component of the 30S ribosomal translation pre-initiation complex which assembles on the 30S ribosome in the order IF-2 and IF-3, IF-1 and N-formylmethionyl-tRNA(fMet); mRNA recruitment can occur at any time during PIC assembly.

It is found in the cytoplasm. Functionally, one of the essential components for the initiation of protein synthesis. Stabilizes the binding of IF-2 and IF-3 on the 30S subunit to which N-formylmethionyl-tRNA(fMet) subsequently binds. Helps modulate mRNA selection, yielding the 30S pre-initiation complex (PIC). Upon addition of the 50S ribosomal subunit IF-1, IF-2 and IF-3 are released leaving the mature 70S translation initiation complex. The polypeptide is Translation initiation factor IF-1 (Pseudoalteromonas translucida (strain TAC 125)).